A 799-amino-acid polypeptide reads, in one-letter code: MTDNKNHSLISDIKSQIKKFSEKALTLEVGNVISLGDGIVLVDGLDNVMLNEIVRFENGVEGMALNLEEDAVGVVLLGDYSNIKEGDRVYRTKRIVEVPVGDVMLGRVVDALGKAVDNKGNIVANKFSVIEKIAPGVMDRKSVHQPLETGILSIDAMFPIGKGQRELIIGDRQTGKTTIAIDAIINQKGRNVNCVYVAIGQKNSTIANVVRELEAHGAMEYTTVVTANASELPALQYIAPFTGVTIAEEWMHQGKDVLIVYDDLSKHAIAYRTLSLLLRRPPGREAYPGDVFYLHSRLLERACKLKDELGAGSITALPIIETQAGDISAYIPTNVISITDGQIFMMTSLFNAGQRPAIDAGQSVSRVGSAAQIKSVKQTGASLKLELANYRELEAFSQFGSDLDDETKRILKLGKAVMAVIKQAPNKPYNQTDEAIILFTVKEKLIPQVPVERIQDFKEYLLNYFKGTKLRADLEDKKAFDKENTPAFRCAIQKAINSFLNNSQDFKPCEEAEQTAFDKFFNENESIVVDGENDFNFINEEVSLKPTTETSEAVQIEEKVQDFVEPQEILETNKMEENHIFEEVEPEKIICEHHEFEIAENQEKIEGQQVLEDTNHEYSIYETVEQSGEVDNDESKDDDLEVLVPVAEIEHDEAILDERENRNWVFSDSAVSEVEKQTIMISISSNEAEQLFDNAKSVVFFKVTPKYPVEKVLVYVTSPVQKVVGEFDLLKIDVNSVNTSWNKYRSSSVISSRKEYLEYFNSHKEAHALLASKVYKYRKPKDLASFNMNKGPSGFTYLK.

Positions 1-549 (MTDNKNHSLI…EEVSLKPTTE (549 aa)) are ATP synthase alpha chain. 170–177 (GDRQTGKT) contributes to the ATP binding site. A unknown region spans residues 550 to 799 (TSEAVQIEEK…KGPSGFTYLK (250 aa)).

Belongs to the ATPase alpha/beta chains family. In terms of assembly, F-type ATPases have 2 components, CF(1) - the catalytic core - and CF(0) - the membrane proton channel. CF(1) has five subunits: alpha(3), beta(3), gamma(1), delta(1), epsilon(1). CF(0) has three main subunits: a(1), b(2) and c(9-12). The alpha and beta chains form an alternating ring which encloses part of the gamma chain. CF(1) is attached to CF(0) by a central stalk formed by the gamma and epsilon chains, while a peripheral stalk is formed by the delta and b chains.

The protein resides in the cell membrane. The enzyme catalyses ATP + H2O + 4 H(+)(in) = ADP + phosphate + 5 H(+)(out). Its function is as follows. Produces ATP from ADP in the presence of a proton gradient across the membrane. The alpha chain is a regulatory subunit. This chain is ATP synthase subunit alpha (atpA), found in Ureaplasma parvum serovar 3 (strain ATCC 27815 / 27 / NCTC 11736).